The sequence spans 99 residues: Large ribosomal subunit protein uL23 (99 aa).

It belongs to the universal ribosomal protein uL23 family. As to quaternary structure, part of the 50S ribosomal subunit. Contacts protein L29, and trigger factor when it is bound to the ribosome.

In terms of biological role, one of the early assembly proteins it binds 23S rRNA. One of the proteins that surrounds the polypeptide exit tunnel on the outside of the ribosome. Forms the main docking site for trigger factor binding to the ribosome. The chain is Large ribosomal subunit protein uL23 from Xanthomonas axonopodis pv. citri (strain 306).